A 622-amino-acid chain; its full sequence is DNA mismatch repair protein MutL (622 aa).

Belongs to the DNA mismatch repair MutL/HexB family.

Functionally, this protein is involved in the repair of mismatches in DNA. It is required for dam-dependent methyl-directed DNA mismatch repair. May act as a 'molecular matchmaker', a protein that promotes the formation of a stable complex between two or more DNA-binding proteins in an ATP-dependent manner without itself being part of a final effector complex. The protein is DNA mismatch repair protein MutL of Prosthecochloris aestuarii (strain DSM 271 / SK 413).